We begin with the raw amino-acid sequence, 582 residues long: MLNDKDLSTWQTFRRLWPMISPFKAGLAVAAIALIINAAGDTLMLSLLKPLLDEGFGKADRSVLLWMPLVVIGLMLVRGASGFVSSYCVSWVSGKVVMNMRRRLFSHIMGMPVAFFDQQSTGTLLSRITYDSEQVAASSSGALITVVREGASIIGLFILMFYYSWQLSIILIVIAPIVSIAMRMVSKRFRSISKNMQDTMGHVTTSTEQMLKGHKEVLMFGGQDVETKRFEQVSNRMRQQGMKMVSASSISDPIIQLIASLALAFVLYAASFPSVMETLTAGTITVVFSSMIALMRPLKSLTNVNAQFQRGMAACQTLFAILDMEQERDTGKREIERAKGELEFRQVNFAYPARENLALKNINLHIPVGKTVALVGRSGSGKSTIASLITRFYDIQSGEILLDGHDLREYRLSSLRNQVALVSQNVHLFNDTIANNIAYARNENYSREEIERAAKMAYAMDFINKMEHGLDTVIGENGVMLSGGQRQRIAIARALLRDSPILILDEATSALDTESERAIQAALDELQKDRTALVIAHRLSTIEKADEILVVEDGRIIERGNHTALLATNGAYAQLHRMQFGE.

Helical transmembrane passes span 16–36 (LWPM…ALII), 63–83 (VLLW…ASGF), 153–173 (IIGL…ILIV), 253–273 (PIIQ…ASFP), and 275–295 (VMET…IALM). One can recognise an ABC transmembrane type-1 domain in the interval 28 to 310 (AVAAIALIIN…LTNVNAQFQR (283 aa)). One can recognise an ABC transporter domain in the interval 342–578 (LEFRQVNFAY…NGAYAQLHRM (237 aa)). Residue 376–383 (GRSGSGKS) participates in ATP binding.

It belongs to the ABC transporter superfamily. Lipid exporter (TC 3.A.1.106) family. Homodimer.

It localises to the cell inner membrane. It carries out the reaction ATP + H2O + lipid A-core oligosaccharideSide 1 = ADP + phosphate + lipid A-core oligosaccharideSide 2.. Functionally, involved in lipopolysaccharide (LPS) biosynthesis. Translocates lipid A-core from the inner to the outer leaflet of the inner membrane. Transmembrane domains (TMD) form a pore in the inner membrane and the ATP-binding domain (NBD) is responsible for energy generation. This chain is ATP-dependent lipid A-core flippase, found in Pectobacterium atrosepticum (strain SCRI 1043 / ATCC BAA-672) (Erwinia carotovora subsp. atroseptica).